Here is a 63-residue protein sequence, read N- to C-terminus: Conotoxin Vi5.1a (63 aa).

The first 22 residues, 1-22 (MRCVPVFIILLLLIPSAPSADA), serve as a signal peptide directing secretion. A propeptide spanning residues 23–50 (QPKTKDDVPLASYHDNAERTLQRLWNQR) is cleaved from the precursor. Pro-62 carries the post-translational modification Proline amide.

Belongs to the conotoxin T superfamily. In terms of processing, contains 2 disulfide bonds that can be either 'C1-C3, C2-C4' or 'C1-C4, C2-C3', since these disulfide connectivities have been observed for conotoxins with cysteine framework V (for examples, see AC P0DQQ7 and AC P81755). Expressed by the venom duct.

The protein localises to the secreted. This chain is Conotoxin Vi5.1a, found in Conus virgo (Virgin cone).